We begin with the raw amino-acid sequence, 466 residues long: UPF0652 protein C16A11.03c (466 aa).

It belongs to the UPF0652 family.

Its subcellular location is the cytoplasm. The protein localises to the nucleus. This chain is UPF0652 protein C16A11.03c, found in Schizosaccharomyces pombe (strain 972 / ATCC 24843) (Fission yeast).